The chain runs to 466 residues: Signal recognition particle 54 kDa protein (466 aa).

Residues 104–111 (GLQGSGKT), 184–188 (DTAGR), and 242–245 (TKLD) each bind GTP. Residues 446–466 (QQQGGGGMGGLGGGGGLGPFG) form a disordered region. Positions 448-466 (QGGGGMGGLGGGGGLGPFG) are enriched in gly residues.

It belongs to the GTP-binding SRP family. SRP54 subfamily. In terms of assembly, part of the signal recognition particle protein translocation system, which is composed of SRP and FtsY. Archaeal SRP consists of a 7S RNA molecule of 300 nucleotides and two protein subunits: SRP54 and SRP19.

It is found in the cytoplasm. The catalysed reaction is GTP + H2O = GDP + phosphate + H(+). In terms of biological role, involved in targeting and insertion of nascent membrane proteins into the cytoplasmic membrane. Binds to the hydrophobic signal sequence of the ribosome-nascent chain (RNC) as it emerges from the ribosomes. The SRP-RNC complex is then targeted to the cytoplasmic membrane where it interacts with the SRP receptor FtsY. This Haloquadratum walsbyi (strain DSM 16790 / HBSQ001) protein is Signal recognition particle 54 kDa protein.